The chain runs to 774 residues: MTLRSVQSRSKRKPIDVFDYSDEDDRVEEESKKLLRKFDSPVTKKHHCAIDKYEFLRCFAKDTQSESKVLQHIVIDVEVPVKEEPSRCELSGDGNSDLIDVISNGSHRRIGIDSLTSSSLSENDEVSTGEATNPASDPHEVDPENAQVLIIPDVIIYGDIYCTNSKLTFSRNCMNVESSSVNATKGTFSCQWTIEDIIKIESQWCLEVETAFVNVLLKSRKPEGVDIAKDISGIDLLKFSVYDPKWSKEVETIRSLDSRYKNIWFDTITESEEIAFSGHDLGTSLTNLADSFEDLVYPQGEPDAVVVRKQDIELLKPRRFINDTIIDFYIKYLKNRISPKERGRFHFFNCFFFRKLANLDKGTPSTCGGREAYQRVQKWTKNVDLFEKDYIFIPINCSFHWSLVIICHPGELVPSHVENPQRVPCILHLDSIKGSHKGGLINIFPSYLREEWKARHENTTNDSSRAPNMQSISLELPQQENSFDCGLFLLHYLDLFVAQAPAKFNPSLISRSANFLTRNWFPAKEASLKRRNILELLYNLHKGHDPSILPANSKSEPPHCGVSNRNDQETESENVIECCNWIKPFDGSSSTVTDISQTKTCSPDLILSKEVSYSGGYDPPSSKLRKVFMSPIVEEVQESCEKKDHLEMDIQKSTGHEIETLRKEGCMLYIEDSDDEEAVSVEYVSDSQDSYEVEMKVEDDDDDELIVTGESSGIHGSREIKSDSASIERVNKSRDSTAASCYNDFLLVLSDDERSSDDKENILISSNVMAKPKT.

The disordered stretch occupies residues 118–141 (SSLSENDEVSTGEATNPASDPHEV). Catalysis depends on residues His-400, Asp-430, and Cys-485. A disordered region spans residues 548–568 (ILPANSKSEPPHCGVSNRNDQ).

It belongs to the peptidase C48 family.

Its function is as follows. Protease that catalyzes two essential functions in the SUMO pathway: processing of full-length SUMOs to their mature forms and deconjugation of SUMO from targeted proteins. The chain is Probable ubiquitin-like-specific protease 2A (ULP2A) from Arabidopsis thaliana (Mouse-ear cress).